Reading from the N-terminus, the 994-residue chain is Zinc finger protein basonuclin-1 (994 aa).

The tract at residues 1–29 (MRRRPPSRGGRGAARARETRRQPRHRSGR) is disordered. The segment at 240–249 (MTFMLPFQFF) is hydrophobic. 2 C2H2-type zinc fingers span residues 357–380 (VFCT…NAVH) and 385–414 (HKCT…PRLH). Disordered regions lie at residues 402–425 (RNRH…RDKD) and 444–472 (TVTS…FPNI). A Nuclear localization signal motif is present at residues 533 to 539 (PKKKSRK). Residues Ser-537 and Ser-541 each carry the phosphoserine modification. The interval 555-639 (NEKRHNLSSD…HNSERETEQT (85 aa)) is disordered. The segment covering 563-578 (SDEDMPLQVVSEDEQE) has biased composition (acidic residues). The span at 603 to 614 (PEGERPCHRESV) shows a compositional bias: basic and acidic residues. The segment covering 615 to 630 (IESSGAISQTPEQATH) has biased composition (polar residues). 2 consecutive C2H2-type zinc fingers follow at residues 720 to 743 (FQCD…KNMH) and 748 to 775 (HTCT…LNLH). The span at 859-877 (STTSSMKSESSSHSSWDSD) shows a compositional bias: low complexity. A disordered region spans residues 859–881 (STTSSMKSESSSHSSWDSDGVSE). C2H2-type zinc fingers lie at residues 928 to 951 (ITCH…KTVH) and 956 to 983 (HKCK…PNLH). The interval 970-994 (VRSRNRHSQNPNLHKSLASSPSHLQ) is disordered.

Interacts with HSF2BP (via C-terminus). Post-translationally, phosphorylation on Ser-537 and Ser-541 leads to cytoplasmic localization. In terms of tissue distribution, in epidermis, primarily detected in cells of the basal or immediately suprabasal layers (at protein level). In hair follicles, mainly expressed in the outer root sheath (at protein level). Expressed in epidermis, testis and foreskin, and to a lower extent in thymus, spleen, mammary glands, placenta, brain and heart. Expressed in the ovary, notably in oocytes.

It localises to the nucleus. Its subcellular location is the cytoplasm. The protein resides in the nucleoplasm. Functionally, transcriptional activator. It is likely involved in the regulation of keratinocytes terminal differentiation in squamous epithelia and hair follicles. Required for the maintenance of spermatogenesis. It is involved in the positive regulation of oocyte maturation, probably acting through the control of BMP15 levels and regulation of AKT signaling cascade. May also play a role in the early development of embryos. In Homo sapiens (Human), this protein is Zinc finger protein basonuclin-1 (BNC1).